The following is a 304-amino-acid chain: UDP-3-O-acyl-N-acetylglucosamine deacetylase (304 aa).

Zn(2+)-binding residues include histidine 78, histidine 235, and aspartate 239. Histidine 262 (proton donor) is an active-site residue.

This sequence belongs to the LpxC family. It depends on Zn(2+) as a cofactor.

The enzyme catalyses a UDP-3-O-[(3R)-3-hydroxyacyl]-N-acetyl-alpha-D-glucosamine + H2O = a UDP-3-O-[(3R)-3-hydroxyacyl]-alpha-D-glucosamine + acetate. The protein operates within glycolipid biosynthesis; lipid IV(A) biosynthesis; lipid IV(A) from (3R)-3-hydroxytetradecanoyl-[acyl-carrier-protein] and UDP-N-acetyl-alpha-D-glucosamine: step 2/6. Catalyzes the hydrolysis of UDP-3-O-myristoyl-N-acetylglucosamine to form UDP-3-O-myristoylglucosamine and acetate, the committed step in lipid A biosynthesis. This Anaeromyxobacter sp. (strain Fw109-5) protein is UDP-3-O-acyl-N-acetylglucosamine deacetylase.